We begin with the raw amino-acid sequence, 278 residues long: Manganese import system permease protein ScaB (278 aa).

8 helical membrane passes run 18 to 38, 40 to 60, 61 to 81, 136 to 156, 172 to 192, 194 to 214, 220 to 240, and 244 to 264; these read ALIT…FIIL, GMSL…ALSF, ILGI…SILI, VTIG…RPLL, VKLY…TAMQ, VGTI…YLYA, MMLL…FIGY, and IAVG…SFFI.

Belongs to the ABC-3 integral membrane protein family.

It localises to the cell membrane. Part of an ABC transporter complex involved in manganese import. This chain is Manganese import system permease protein ScaB, found in Streptococcus pneumoniae.